Here is a 101-residue protein sequence, read N- to C-terminus: Small ubiquitin-related modifier 1 (101 aa).

The region spanning 20–97 (EYIKLKVIGQ…IEVYQEQTGG (78 aa)) is the Ubiquitin-like domain. Gly-97 is covalently cross-linked (Glycyl lysine isopeptide (Gly-Lys) (interchain with K-? in acceptor proteins)). Positions 98–101 (HSTV) are excised as a propeptide.

It belongs to the ubiquitin family. SUMO subfamily. As to quaternary structure, interacts with SAE2, UBE2I, RANBP2, PIAS1 and PIAS2. Covalently attached to a number of proteins. Post-translationally, cleavage of precursor form by a sentrin-specific protease is necessary for function.

Its subcellular location is the nucleus membrane. It is found in the nucleus speckle. The protein resides in the cytoplasm. It localises to the nucleus. The protein localises to the PML body. Its subcellular location is the cell membrane. Ubiquitin-like protein that can be covalently attached to proteins as a monomer or a lysine-linked polymer. Covalent attachment via an isopeptide bond to its substrates requires prior activation by the E1 complex SAE1-SAE2 and linkage to the E2 enzyme UBE2I. This post-translational modification on lysine residues of proteins plays a crucial role in a number of cellular processes such as nuclear transport, DNA replication and repair, mitosis and signal transduction. Polymeric SUMO1 chains are also susceptible to polyubiquitination which functions as a signal for proteasomal degradation of modified proteins. The protein is Small ubiquitin-related modifier 1 (SUMO1) of Gallus gallus (Chicken).